A 560-amino-acid polypeptide reads, in one-letter code: Interferon alpha/beta receptor 1 (560 aa).

The signal sequence occupies residues 1–24 (MLGLLGATTLMLVAGAPWVLPAGG). Topologically, residues 25–437 (ADLRSPENVV…EKTKPGSTSQ (413 aa)) are extracellular. Fibronectin type-III domains are found at residues 29 to 125 (SPEN…FQEA), 133 to 224 (HLEA…INTT), 231 to 329 (SPEN…TEMQ), and 333 to 433 (FPPV…TKPG). Residue Asn-55 is glycosylated (N-linked (GlcNAc...) asparagine). Cys-76 and Cys-84 are joined by a disulfide. Asn-85, Asn-108, and Asn-172 each carry an N-linked (GlcNAc...) asparagine glycan. Cysteines 199 and 220 form a disulfide. N-linked (GlcNAc...) asparagine glycans are attached at residues Asn-222, Asn-249, and Asn-254. A disulfide bridge links Cys-283 with Cys-291. 3 N-linked (GlcNAc...) asparagine glycosylation sites follow: Asn-313, Asn-377, and Asn-417. An intrachain disulfide couples Cys-404 to Cys-427. A helical membrane pass occupies residues 438-458 (AWLIAGILSAILLFPAVFYGV). Topologically, residues 459-560 (KVVSRCINYV…GEEILRQAAV (102 aa)) are cytoplasmic. Cys-464 carries the S-palmitoyl cysteine lipid modification. Tyr-467 and Tyr-482 each carry phosphotyrosine; by TYK2. Positions 492–501 (LLSTSEEQTE) are important for interaction with TYK2. Ser-496 and Ser-536 each carry phosphoserine. The segment at 520-560 (QIDDNHSRCSSQTNRDSGVYSNEDENSGSKIGEEILRQAAV) is disordered. Over residues 527–539 (RCSSQTNRDSGVY) the composition is skewed to polar residues. Residues 550 to 560 (IGEEILRQAAV) show a composition bias toward basic and acidic residues.

The protein belongs to the type II cytokine receptor family. As to quaternary structure, heterodimer with IFNAR2; forming the receptor for type I interferon. Interacts with TYK2. Interacts with STAT1 and STAT2; the interaction requires its phosphorylation at Tyr-482. Interacts (serine-phosphorylated form) with FBXW11, the substrate recognition component of a SCF (SKP1-CUL1-F-box protein) E3 ubiquitin-protein ligase complex. Interacts with SHMT2; this promotes interaction with ABRAXAS2 and the BRISC complex. Interacts with TRIM10; this interaction prevents association between IFNAR1 and TYK2. Ubiquitinated, leading to its internalization and degradation. Polyubiquitinated via 'Lys-48'-linked and 'Lys-63'-linked ubiquitin chains, leading to receptor internalization and lysosomal degradation. The 'Lys-63'-linked ubiquitin chains are cleaved off by the BRISC complex. In terms of processing, phosphorylated on tyrosine residues in response to interferon-binding: phosphorylation by TYK2 tyrosine kinase creates docking sites for STAT proteins. Phosphorylated on serine residues in response to interferon binding; this promotes interaction with FBXW11 and ubiquitination. Post-translationally, palmitoylation at Cys-464 is required for the activation of STAT1 and STAT2.

It localises to the cell membrane. The protein localises to the late endosome. Its subcellular location is the lysosome. Its function is as follows. Together with IFNAR2, forms the heterodimeric receptor for type I interferons (including interferons alpha, beta, epsilon, omega and kappa). Type I interferon binding activates the JAK-STAT signaling cascade, resulting in transcriptional activation or repression of interferon-regulated genes that encode the effectors of the interferon response. Mechanistically, type I interferon-binding brings the IFNAR1 and IFNAR2 subunits into close proximity with one another, driving their associated Janus kinases (JAKs) (TYK2 bound to IFNAR1 and JAK1 bound to IFNAR2) to cross-phosphorylate one another. The activated kinases phosphorylate specific tyrosine residues on the intracellular domains of IFNAR1 and IFNAR2, forming docking sites for the STAT transcription factors. STAT proteins are then phosphorylated by the JAKs, promoting their translocation into the nucleus to regulate expression of interferon-regulated genes. Can also act independently of IFNAR2: form an active IFNB1 receptor by itself and activate a signaling cascade that does not involve activation of the JAK-STAT pathway. The protein is Interferon alpha/beta receptor 1 (IFNAR1) of Sus scrofa (Pig).